Consider the following 511-residue polypeptide: ATP synthase subunit alpha (511 aa).

169-176 provides a ligand contact to ATP; sequence GDRQTGKT.

It belongs to the ATPase alpha/beta chains family. In terms of assembly, F-type ATPases have 2 components, CF(1) - the catalytic core - and CF(0) - the membrane proton channel. CF(1) has five subunits: alpha(3), beta(3), gamma(1), delta(1), epsilon(1). CF(0) has three main subunits: a(1), b(2) and c(9-12). The alpha and beta chains form an alternating ring which encloses part of the gamma chain. CF(1) is attached to CF(0) by a central stalk formed by the gamma and epsilon chains, while a peripheral stalk is formed by the delta and b chains.

Its subcellular location is the cell inner membrane. It catalyses the reaction ATP + H2O + 4 H(+)(in) = ADP + phosphate + 5 H(+)(out). Functionally, produces ATP from ADP in the presence of a proton gradient across the membrane. The alpha chain is a regulatory subunit. The protein is ATP synthase subunit alpha of Bartonella tribocorum (strain CIP 105476 / IBS 506).